Consider the following 360-residue polypeptide: MLVWLAEYLVQYNTAFNVVSYITFRAIMALLTAMGIGLWIGPEVIRRLQLLKFGQEVRNDGPESHFKKRGTPTMGGIMILIAIGVSTLLWADLRNSYIWFVLFVLFGYGAVGFVDDYWKIKRKNTDGLIARWKYFWLSVIALIAVFGIYAVGKDTAATQLVVPFFKDVMPQLGIFFIILSYFVIVGTSNAVNLTDGLDGLAIVPTIMVASAFALIAWATGNFNFAQYLHIPFVPNAGELVILCTAIVGAGLGFLWYNTYPAQVFMGDVGSLSLGGALGTIAVLVRQELLLVIMGGVFVVEALSVILQVGSYKLRQKRIFRMAPIHHHFELKGWPEPRVIVRFWIITLMLVLIGLVTLKLR.

The next 10 helical transmembrane spans lie at 21–41 (YITF…LWIG), 73–93 (TMGG…WADL), 98–118 (IWFV…DDYW), 132–152 (WKYF…YAVG), 168–188 (VMPQ…VGTS), 199–219 (GLAI…AWAT), 236–256 (AGEL…FLWY), 263–283 (VFMG…IAVL), 288–308 (LLLV…ILQV), and 338–358 (VIVR…VTLK).

Belongs to the glycosyltransferase 4 family. MraY subfamily. Mg(2+) is required as a cofactor.

The protein localises to the cell inner membrane. The catalysed reaction is UDP-N-acetyl-alpha-D-muramoyl-L-alanyl-gamma-D-glutamyl-meso-2,6-diaminopimeloyl-D-alanyl-D-alanine + di-trans,octa-cis-undecaprenyl phosphate = di-trans,octa-cis-undecaprenyl diphospho-N-acetyl-alpha-D-muramoyl-L-alanyl-D-glutamyl-meso-2,6-diaminopimeloyl-D-alanyl-D-alanine + UMP. It participates in cell wall biogenesis; peptidoglycan biosynthesis. Its function is as follows. Catalyzes the initial step of the lipid cycle reactions in the biosynthesis of the cell wall peptidoglycan: transfers peptidoglycan precursor phospho-MurNAc-pentapeptide from UDP-MurNAc-pentapeptide onto the lipid carrier undecaprenyl phosphate, yielding undecaprenyl-pyrophosphoryl-MurNAc-pentapeptide, known as lipid I. In Actinobacillus pleuropneumoniae serotype 5b (strain L20), this protein is Phospho-N-acetylmuramoyl-pentapeptide-transferase.